The following is a 360-amino-acid chain: Molybdenum import ATP-binding protein ModC (360 aa).

The ABC transporter domain occupies 5-234 (VKLHLGYQDF…LDLPLALGDD (230 aa)). Residue 32 to 39 (GHSGSGKT) participates in ATP binding. The 66-residue stretch at 295–360 (HSSILNRLPV…AQIKAVAVLA (66 aa)) folds into the Mop domain.

The protein belongs to the ABC transporter superfamily. Molybdate importer (TC 3.A.1.8) family. The complex is composed of two ATP-binding proteins (ModC), two transmembrane proteins (ModB) and a solute-binding protein (ModA).

The protein resides in the cell inner membrane. It carries out the reaction molybdate(out) + ATP + H2O = molybdate(in) + ADP + phosphate + H(+). Functionally, part of the ABC transporter complex ModABC involved in molybdenum import. Responsible for energy coupling to the transport system. The polypeptide is Molybdenum import ATP-binding protein ModC (Pseudomonas fluorescens (strain ATCC BAA-477 / NRRL B-23932 / Pf-5)).